The primary structure comprises 211 residues: FMN-dependent NADH:quinone oxidoreductase 3 (211 aa).

17–19 (SFS) is a binding site for FMN.

This sequence belongs to the azoreductase type 1 family. Homodimer. FMN is required as a cofactor.

It catalyses the reaction 2 a quinone + NADH + H(+) = 2 a 1,4-benzosemiquinone + NAD(+). It carries out the reaction N,N-dimethyl-1,4-phenylenediamine + anthranilate + 2 NAD(+) = 2-(4-dimethylaminophenyl)diazenylbenzoate + 2 NADH + 2 H(+). In terms of biological role, quinone reductase that provides resistance to thiol-specific stress caused by electrophilic quinones. Also exhibits azoreductase activity. Catalyzes the reductive cleavage of the azo bond in aromatic azo compounds to the corresponding amines. The polypeptide is FMN-dependent NADH:quinone oxidoreductase 3 (Halalkalibacterium halodurans (strain ATCC BAA-125 / DSM 18197 / FERM 7344 / JCM 9153 / C-125) (Bacillus halodurans)).